The sequence spans 147 residues: MERTFVYLKPNAVRRGLVGEIIKRFEQRGIKIVALKLLWMSKQQAEKLYEMHKGKSFYNDLIDFVTGGPIVAMIVEAPRVIEMVRHIIGDTDPLKAGTGTIRGEFALTITKNLIHASDSKENFEREYKIFFSDDEIIDYYLDVQDDI.

ATP contacts are provided by K9, F57, R85, T91, R102, and N112. Catalysis depends on H115, which acts as the Pros-phosphohistidine intermediate.

This sequence belongs to the NDK family. Homotetramer. The cofactor is Mg(2+).

The protein localises to the cytoplasm. It carries out the reaction a 2'-deoxyribonucleoside 5'-diphosphate + ATP = a 2'-deoxyribonucleoside 5'-triphosphate + ADP. The catalysed reaction is a ribonucleoside 5'-diphosphate + ATP = a ribonucleoside 5'-triphosphate + ADP. In terms of biological role, major role in the synthesis of nucleoside triphosphates other than ATP. The ATP gamma phosphate is transferred to the NDP beta phosphate via a ping-pong mechanism, using a phosphorylated active-site intermediate. This chain is Nucleoside diphosphate kinase, found in Thermosipho africanus (strain TCF52B).